Here is a 738-residue protein sequence, read N- to C-terminus: Leucine-rich repeat flightless-interacting protein 1 (738 aa).

Residue threonine 2 is modified to N-acetylthreonine. Serine 16 is modified (phosphoserine). Residues 40 to 65 (IRMKELERQQKEVEERPDKDFAEKGS) are compositionally biased toward basic and acidic residues. Residues 40–98 (IRMKELERQQKEVEERPDKDFAEKGSRNMPSLSAATLASLGGTSSRRGSGDTSISMDTE) form a disordered region. The segment covering 78-94 (SLGGTSSRRGSGDTSIS) has biased composition (low complexity). A phosphoserine mark is found at serine 83, serine 84, serine 88, and serine 92. Positions 94–194 (SMDTEASIRE…LRQREEMLEK (101 aa)) form a coiled coil. Lysine 249 participates in a covalent cross-link: Glycyl lysine isopeptide (Lys-Gly) (interchain with G-Cter in SUMO1). 2 stretches are compositionally biased toward basic and acidic residues: residues 253-262 (VEKVGQRETL) and 277-297 (DCVDRGVLHPGEKAENQRPVE). The segment at 253–738 (VEKVGQRETL…SKSKEDCTMS (486 aa)) is disordered. Serine 302 carries the post-translational modification Phosphoserine. A compositionally biased stretch (polar residues) spans 314–326 (EVQSQDQENTSIL). The segment covering 330-347 (EQIESHEVTNKSDSRDSN) has biased composition (basic and acidic residues). Serine 346 and serine 348 each carry phosphoserine. Positions 371 to 380 (KNQSENSMDS) are enriched in polar residues. Basic and acidic residues-rich tracts occupy residues 381–400 (QGKENQEDLGKGSFEPRPDH) and 467–476 (SERELAHEAA). Positions 479 to 580 (EEALTQSSQA…KNKKKKAAAP (102 aa)) are DNA-binding. Polar residues-rich tracts occupy residues 483–495 (TQSSQAGGENTVT) and 520–534 (TVQSGHQDTTGPGST). A compositionally biased stretch (basic and acidic residues) spans 535–553 (DTKHTSPHAKERNKAKSEQ). Residues serine 551 and serine 560 each carry the phosphoserine modification. Positions 563–577 (KKTKNKKKKNKKKKA) are enriched in basic residues. A compositionally biased stretch (basic and acidic residues) spans 606 to 626 (RVQATDKKWAAETPELKEDPQ). 2 positions are modified to phosphoserine: serine 675 and serine 701. 2 stretches are compositionally biased toward basic and acidic residues: residues 691-703 (QADEKGIEGHSVD) and 720-738 (EQAREEVGNSKSKEDCTMS).

It belongs to the LRRFIP family. Homodimer. May also form higher oligomers. Interacts with FLII. Interacts with MYD88. Competes with FLII for MyD88-binding, even in the absence of LPS.

It localises to the nucleus. The protein localises to the cytoplasm. Its function is as follows. Transcriptional repressor which preferentially binds to the GC-rich consensus sequence (5'-AGCCCCCGGCG-3') and may regulate expression of TNF, EGFR and PDGFA. May control smooth muscle cells proliferation following artery injury through PDGFA repression. May also bind double-stranded RNA. Positively regulates Toll-like receptor (TLR) signaling in response to agonist probably by competing with the negative FLII regulator for MYD88-binding. This chain is Leucine-rich repeat flightless-interacting protein 1 (Lrrfip1), found in Rattus norvegicus (Rat).